A 100-amino-acid polypeptide reads, in one-letter code: Small ribosomal subunit protein uS14c (100 aa).

Belongs to the universal ribosomal protein uS14 family. Part of the 30S ribosomal subunit.

The protein resides in the plastid. It is found in the chloroplast. Binds 16S rRNA, required for the assembly of 30S particles. The chain is Small ribosomal subunit protein uS14c from Lotus japonicus (Lotus corniculatus var. japonicus).